Reading from the N-terminus, the 108-residue chain is MRSMSFEEAIKSLDSGIIVDIEVTPGSRSLSVPSGYNEWRKRIEVKLTRNAQKGKANEQLIESLAELFGICSSDIFISSGATSSKKSLLIKGVSYQQAVLVFGKHLKG.

The protein belongs to the UPF0235 family.

In Methanosarcina mazei (strain ATCC BAA-159 / DSM 3647 / Goe1 / Go1 / JCM 11833 / OCM 88) (Methanosarcina frisia), this protein is UPF0235 protein MM_0822.